The sequence spans 239 residues: MAPYRLDVISLAPQAFAPLPEVGVIGRAFGAKIAELHLHNPRDHAIDRHRKVDDVPYGGGAGMVLKPEPVFAAFESVPVCSRRRVLLMSPQGQPLRQVDLQRWSQDYDQLVFLCGHYEGFDERIRSLADEEVSMGDFVLTGGELPAMTIINGVVRLLPGTVGTPESLVEESHSDLLLEHSHYTRPADFRGMTVPDVLRSGDHGAVALWRQQQREQRTQERRPDLWNRWQQIQNPTPPAP.

Residues G115 and M134–L139 each bind S-adenosyl-L-methionine. The disordered stretch occupies residues Q210–P239. The segment covering Q211–L224 has biased composition (basic and acidic residues).

This sequence belongs to the RNA methyltransferase TrmD family. Homodimer.

Its subcellular location is the cytoplasm. It catalyses the reaction guanosine(37) in tRNA + S-adenosyl-L-methionine = N(1)-methylguanosine(37) in tRNA + S-adenosyl-L-homocysteine + H(+). Its function is as follows. Specifically methylates guanosine-37 in various tRNAs. The protein is tRNA (guanine-N(1)-)-methyltransferase of Synechococcus sp. (strain CC9311).